Reading from the N-terminus, the 451-residue chain is Photosystem II CP43 reaction center protein (451 aa).

Topologically, residues 1–46 (ATNRDQESSGFAWWAGNARLINLSGKLLGAHVAHAGLIVFWAGAMT) are cytoplasmic. Trp-13, Leu-27, and Ala-30 together coordinate chlorophyll a. Residues 47–71 (LFELAHFIPEKPMYEQGLILIPHIA) traverse the membrane as a helical segment. Residues 72–111 (TLGWGVGPGGEVVDTFPFFVVGVVHLISSAVLGFGGVYHA) lie on the Lumenal side of the membrane. Residues Val-92 and Gly-106 each contribute to the chlorophyll a site. A helical membrane pass occupies residues 112 to 133 (IRGPETLEEYSSFFGYDWKDKN). The Cytoplasmic portion of the chain corresponds to 134–155 (KMTTILGFHLIVLGIGALLLVA). Position 138 (Ile-138) interacts with chlorophyll a. Residues 156 to 178 (KAMFFGGLYDTWAPGGGDVRVIT) form a helical membrane-spanning segment. At 179 to 232 (NPTLDPRVIFGYLLKSPFGGEGWIVSVNNLEDVVGGHIWIGLICIAGGIWHILT) the chain is on the lumenal side. Residues Val-211 and Gly-225 each coordinate chlorophyll a. Residues 233–253 (TPFGWARRAFIWSGEAYLSYS) traverse the membrane as a helical segment. Topologically, residues 254-268 (LGALSMMGFIATCFV) are cytoplasmic. The helical transmembrane segment at 269–290 (WFNNTVYPSEFYGPTGPEASQA) threads the bilayer. Residues 291 to 424 (QAMTFLIRDQ…FLVGHLWHAG (134 aa)) are Lumenal-facing. [CaMn4O5] cluster is bound at residue Glu-345. Chlorophyll a-binding residues include Leu-404, Phe-415, and Gly-418. The helical transmembrane segment at 425–449 (RARAAAAGFEKGIDRESEPVLSMPS) threads the bilayer. The Cytoplasmic segment spans residues 450-451 (LD).

Belongs to the PsbB/PsbC family. PsbC subfamily. In terms of assembly, PSII is composed of 1 copy each of membrane proteins PsbA, PsbB, PsbC, PsbD, PsbE, PsbF, PsbH, PsbI, PsbJ, PsbK, PsbL, PsbM, PsbT, PsbX, PsbY, PsbZ, Psb30/Ycf12, peripheral proteins PsbO, CyanoQ (PsbQ), PsbU, PsbV and a large number of cofactors. It forms dimeric complexes. Requires Binds multiple chlorophylls and provides some of the ligands for the Ca-4Mn-5O cluster of the oxygen-evolving complex. It may also provide a ligand for a Cl- that is required for oxygen evolution. PSII binds additional chlorophylls, carotenoids and specific lipids. as cofactor.

It is found in the cellular thylakoid membrane. In terms of biological role, one of the components of the core complex of photosystem II (PSII). It binds chlorophyll and helps catalyze the primary light-induced photochemical processes of PSII. PSII is a light-driven water:plastoquinone oxidoreductase, using light energy to abstract electrons from H(2)O, generating O(2) and a proton gradient subsequently used for ATP formation. The polypeptide is Photosystem II CP43 reaction center protein (Thermostichus vulcanus (Synechococcus vulcanus)).